Here is a 175-residue protein sequence, read N- to C-terminus: Thioredoxin-like protein CITRX, chloroplastic (175 aa).

A chloroplast-targeting transit peptide spans 1–64 (MQAASLAFHP…KPPAVGKYVR (64 aa)). In terms of domain architecture, Thioredoxin spans 74–175 (AKEIQELIKG…MMRDIIDNDL (102 aa)). Active-site nucleophile residues include cysteine 98 and cysteine 101. The cysteines at positions 98 and 101 are disulfide-linked.

It belongs to the thioredoxin family. Plant CITRX-type subfamily. As to quaternary structure, interacts with Cf-9 resistance protein.

It localises to the plastid. The protein localises to the chloroplast. Functionally, probable thiol-disulfide oxidoreductase that may play a role in proper chloroplast development. The sequence is that of Thioredoxin-like protein CITRX, chloroplastic from Solanum lycopersicum (Tomato).